The following is a 471-amino-acid chain: 7-dehydrocholesterol reductase (471 aa).

Residues 1-23 are disordered; that stretch reads MASKSQHNAPKVKSPNGKAGSQG. Ser-14 bears the Phosphoserine mark. 8 consecutive transmembrane segments (helical) span residues 36–56, 95–115, 144–164, 173–193, 233–253, 262–282, 302–322, and 327–347; these read LASIIFLLLFAPFIVYYFIMA, LYALWVSFQVLLYSWLPDFCH, LQAWLITHILWFVNAYLLSWF, WIPLLWCANILGYAVSTFAMI, LFFNGRPGIVAWTLINLSFAA, VTNSMILVNVLQAIYVLDFFW, LGWGDCVWLPYLYTLQGLYLV, and QLSTPNALGILLLGLVGYYIF. Residues Lys-354, Arg-358, Leu-391, Trp-396, and 403–404 each bind NADP(+); that span reads NY. The helical transmembrane segment at 416-436 threads the bilayer; the sequence is LACGGGHLLPYFYIIYMTILL. Residues Asp-443, 447–451, and Tyr-458 each bind NADP(+); that span reads CANKY.

Belongs to the ERG4/ERG24 family. As to quaternary structure, interacts with DHCR24; this interaction regulates DHCR7 activity. Interacts with TMEM147.

Its subcellular location is the endoplasmic reticulum membrane. The enzyme catalyses cholesterol + NADP(+) = 7-dehydrocholesterol + NADPH + H(+). It catalyses the reaction 7-dehydrodesmosterol + NADPH + H(+) = desmosterol + NADP(+). It carries out the reaction 5,6alpha-epoxy-5alpha-cholestan-3beta-ol + H2O = 5alpha-cholestane-3beta,5,6beta-triol. The catalysed reaction is 5,6beta-epoxy-5beta-cholestan-3beta-ol + H2O = 5alpha-cholestane-3beta,5,6beta-triol. It participates in steroid biosynthesis; cholesterol biosynthesis. Oxidoreductase that catalyzes the last step of the cholesterol synthesis pathway, which transforms cholesta-5,7-dien-3beta-ol (7-dehydrocholesterol,7-DHC) into cholesterol by reducing the C7-C8 double bond of its sterol core. Can also metabolize cholesta-5,7,24-trien-3beta-ol (7-dehydrodemosterol, 7-DHD) to desmosterol, which is then metabolized by the Delta(24)-sterol reductase (DHCR24) to cholesterol. Modulates ferroptosis (a form of regulated cell death driven by iron-dependent lipid peroxidation) through the metabolic breakdown of the anti-ferroptotic metabolites 7-DHC and 7-DHD which, when accumulated, divert the propagation of peroxyl radical-mediated damage from phospholipid components to its sterol core, protecting plasma and mitochondrial membranes from phospholipid autoxidation. In terms of biological role, component of the microsomal antiestrogen binding site (AEBS), a multiproteic complex at the ER membrane that consists of an association between cholestenol Delta-isomerase/EBP and DHCR7. This complex is responsible for cholesterol-5,6-epoxide hydrolase (ChEH) activity, which consists in the hydration of cholesterol-5,6-epoxides (5,6-EC) into cholestane-3beta,5alpha,6beta-triol (CT). The precise role of each component of this complex has not been described yet. The polypeptide is 7-dehydrocholesterol reductase (Dhcr7) (Mus musculus (Mouse)).